The primary structure comprises 1067 residues: Cadmium/zinc-transporting ATPase HMA2 (1067 aa).

An HMA domain is found at 9 to 75 (QKSYFDVLGI…ALNQARLEAS (67 aa)). Transmembrane regions (helical) follow at residues 94-114 (YVLL…WHPL), 117-137 (FALV…IAAI), 140-160 (LTLD…ALKD), 162-182 (SEAG…TRAS), 313-333 (YTPA…IAKA), 342-362 (LALV…TPIA), 649-669 (IIVN…LAFA), and 673-693 (LIWA…MYSM). 3 disordered regions span residues 711–739 (HHGS…HHCS), 760–790 (HDHH…SHGH), and 960–996 (NDTH…GHHP). Residues 724–735 (HGSHAKKNHGVS) are compositionally biased toward basic residues. Basic and acidic residues-rich tracts occupy residues 760-774 (HDHH…EPAH) and 975-996 (SSDH…GHHP).

Belongs to the cation transport ATPase (P-type) (TC 3.A.3) family. Type IB subfamily. In roots, localizes at the pericycle cells. In nodes, localizes in the phloem parenchyma and companion cells of both enlarged and diffuse vascular bundles.

The protein localises to the cell membrane. The enzyme catalyses Zn(2+)(in) + ATP + H2O = Zn(2+)(out) + ADP + phosphate + H(+). It carries out the reaction Cd(2+)(in) + ATP + H2O = Cd(2+)(out) + ADP + phosphate + H(+). Its function is as follows. Zinc/cadmium transporter that plays an essential role in promoting translocation of zinc and cadmium from roots to shoots. May control cadmium loading into xylem. In roots, transports zinc and cadmium from the apoplast to the symplast to facilitate translocation via the phloem. In nodes, functions to load zinc and cadmium to the phloem for the preferential distribution to the upper nodes and panicles. The polypeptide is Cadmium/zinc-transporting ATPase HMA2 (Oryza sativa subsp. japonica (Rice)).